Here is a 324-residue protein sequence, read N- to C-terminus: NAC domain-containing protein 21/22 (324 aa).

Residues 19–171 (LPPGFRFHPK…DWVLCRVFHK (153 aa)) enclose the NAC domain. The Bipartite nuclear localization signal motif lies at 120-137 (RKTLVFYQGRAPRGRKTD).

As to quaternary structure, dimer. Interacts with SINAT5. In terms of processing, ubiquitinated. The interaction with SINAT5 mediate its proteasome-dependent degradation. In terms of tissue distribution, predominantly expressed in the root tip and in lateral root initiation sites. Also detected in expanding cotyledon, and in leaf primordia.

The protein resides in the nucleus. Functionally, transcriptional activator that mediates auxin signaling to promote lateral root development. Activates the expression of two downstream auxin-responsive genes, DBP and AIR3. The chain is NAC domain-containing protein 21/22 (NAC021) from Arabidopsis thaliana (Mouse-ear cress).